The primary structure comprises 414 residues: Transforming growth factor beta-2 proprotein (414 aa).

A signal peptide spans 1 to 20 (MHYCVLSTFLLLHLVPVALS). Asn72, Asn140, and Asn241 each carry an N-linked (GlcNAc...) asparagine glycan. Cystine bridges form between Cys309–Cys318, Cys317–Cys380, Cys346–Cys411, and Cys350–Cys413.

It belongs to the TGF-beta family. Interacts with the serine proteases, HTRA1 and HTRA3. Interacts with ASPN. Interacts with MFAP5. As to quaternary structure, interacts with Transforming growth factor beta-2 (TGF-beta-2) chain; interaction is non-covalent and maintains (TGF-beta-2) in a latent state. Interacts with LRRC32/GARP; leading to regulate activation of TGF-beta-2. Interacts with NREP; the interaction results in a decrease in TGFB2 autoinduction. In terms of assembly, transforming growth factor beta-2: Homodimer; disulfide-linked. Transforming growth factor beta-2: Interacts with TGF-beta receptors (TGFBR1 and TGFBR2), leading to signal transduction. In terms of processing, the precursor proprotein is cleaved in the Golgi apparatus to form Transforming growth factor beta-2 (TGF-beta-2) and Latency-associated peptide (LAP) chains, which remain non-covalently linked, rendering TGF-beta-2 inactive.

The protein resides in the secreted. It localises to the extracellular space. It is found in the extracellular matrix. Functionally, precursor of the Latency-associated peptide (LAP) and Transforming growth factor beta-2 (TGF-beta-2) chains, which constitute the regulatory and active subunit of TGF-beta-2, respectively. Its function is as follows. Required to maintain the Transforming growth factor beta-2 (TGF-beta-2) chain in a latent state during storage in extracellular matrix. Associates non-covalently with TGF-beta-2 and regulates its activation via interaction with 'milieu molecules', such as LTBP1 and LRRC32/GARP, that control activation of TGF-beta-2. In terms of biological role, multifunctional protein that regulates various processes such as angiogenesis and heart development. Activation into mature form follows different steps: following cleavage of the proprotein in the Golgi apparatus, Latency-associated peptide (LAP) and Transforming growth factor beta-2 (TGF-beta-2) chains remain non-covalently linked rendering TGF-beta-2 inactive during storage in extracellular matrix. At the same time, LAP chain interacts with 'milieu molecules', such as LTBP1 and LRRC32/GARP, that control activation of TGF-beta-2 and maintain it in a latent state during storage in extracellular milieus. Once activated following release of LAP, TGF-beta-2 acts by binding to TGF-beta receptors (TGFBR1 and TGFBR2), which transduce signal. This is Transforming growth factor beta-2 proprotein (Tgfb2) from Mus musculus (Mouse).